Reading from the N-terminus, the 485-residue chain is Poly(ADP-ribose) glycohydrolase 2 (485 aa).

Belongs to the poly(ADP-ribose) glycohydrolase family. As to expression, expressed in head and tail neurons.

The protein localises to the cytoplasm. The enzyme catalyses [(1''-&gt;2')-ADP-alpha-D-ribose](n) + H2O = [(1''-&gt;2')-ADP-alpha-D-ribose](n-1) + ADP-D-ribose. Functionally, poly(ADP-ribose) synthesized after DNA damage is only present transiently and is rapidly degraded by poly(ADP-ribose) glycohydrolase. Poly(ADP-ribose) metabolism may be required for maintenance of the normal function of neuronal cells. The protein is Poly(ADP-ribose) glycohydrolase 2 of Caenorhabditis elegans.